Here is a 151-residue protein sequence, read N- to C-terminus: Large ribosomal subunit protein bL9 (151 aa).

The protein belongs to the bacterial ribosomal protein bL9 family.

Its function is as follows. Binds to the 23S rRNA. This chain is Large ribosomal subunit protein bL9, found in Prochlorococcus marinus (strain MIT 9515).